The following is a 496-amino-acid chain: Galactose/methyl galactoside import ATP-binding protein MglA (496 aa).

ABC transporter domains follow at residues 5–240 (LTIR…VGRT) and 243–496 (KRFP…ARYL). 37–44 (GENGAGKS) serves as a coordination point for ATP.

The protein belongs to the ABC transporter superfamily. Galactose/methyl galactoside importer (TC 3.A.1.2.3) family. The complex is composed of one ATP-binding protein (MglA), two transmembrane proteins (MglC) and a solute-binding protein (MglB).

The protein localises to the cell inner membrane. The catalysed reaction is D-galactose(out) + ATP + H2O = D-galactose(in) + ADP + phosphate + H(+). It catalyses the reaction methyl beta-D-galactoside(out) + ATP + H2O = methyl beta-D-galactoside(in) + ADP + phosphate + H(+). Functionally, part of the ABC transporter complex MglABC involved in galactose/methyl galactoside import. Responsible for energy coupling to the transport system. In Treponema pallidum (strain Nichols), this protein is Galactose/methyl galactoside import ATP-binding protein MglA.